The primary structure comprises 164 residues: HTH-type transcriptional regulator IscR (164 aa).

Positions 2–131 (RLTSKGRYAV…NNITLGELVN (130 aa)) constitute an HTH rrf2-type domain. The segment at residues 28 to 51 (LADISERQGISLSYLEQLFSRLRK) is a DNA-binding region (H-T-H motif). Residues cysteine 92, cysteine 98, and cysteine 104 each contribute to the [2Fe-2S] cluster site.

It depends on [2Fe-2S] cluster as a cofactor.

Its function is as follows. Regulates the transcription of several operons and genes involved in the biogenesis of Fe-S clusters and Fe-S-containing proteins. The polypeptide is HTH-type transcriptional regulator IscR (Salmonella agona (strain SL483)).